Here is a 60-residue protein sequence, read N- to C-terminus: uncharacterized protein (60 aa).

This is an uncharacterized protein from Escherichia coli O157:H7.